The chain runs to 224 residues: Ribose-5-phosphate isomerase A (224 aa).

Residues 32-35 (TGST), 85-88 (DGAD), and 98-101 (KGGG) contribute to the substrate site. Glutamate 107 (proton acceptor) is an active-site residue. A substrate-binding site is contributed by lysine 125.

This sequence belongs to the ribose 5-phosphate isomerase family. Homodimer.

It catalyses the reaction aldehydo-D-ribose 5-phosphate = D-ribulose 5-phosphate. It participates in carbohydrate degradation; pentose phosphate pathway; D-ribose 5-phosphate from D-ribulose 5-phosphate (non-oxidative stage): step 1/1. In terms of biological role, catalyzes the reversible conversion of ribose-5-phosphate to ribulose 5-phosphate. In Pseudomonas entomophila (strain L48), this protein is Ribose-5-phosphate isomerase A.